The following is a 1155-amino-acid chain: DNA-directed RNA polymerase subunit beta (1155 aa).

It belongs to the RNA polymerase beta chain family. In terms of assembly, the RNAP catalytic core consists of 2 alpha, 1 beta, 1 beta' and 1 omega subunit. When a sigma factor is associated with the core the holoenzyme is formed, which can initiate transcription.

It catalyses the reaction RNA(n) + a ribonucleoside 5'-triphosphate = RNA(n+1) + diphosphate. In terms of biological role, DNA-dependent RNA polymerase catalyzes the transcription of DNA into RNA using the four ribonucleoside triphosphates as substrates. This chain is DNA-directed RNA polymerase subunit beta, found in Borrelia duttonii (strain Ly).